A 703-amino-acid chain; its full sequence is Protein O-mannosyl-transferase TMEM260 (703 aa).

8 helical membrane-spanning segments follow: residues 20–40 (GALRGSVAVFASVAAVFTLTL), 68–88 (PLFTLLASLTITLFPFGSVAY), 90–110 (VNLLCGLFGAVAASLLFYTVF), 137–157 (IAAEVFSLNNLFVGLLMALTV), 182–202 (SLCNQHTIVLYILCIIPWILF), 218–238 (LTLAFSAGLLPYVYLPVSSYL), 314–334 (KSSVVWLFTGMLCLYSLFFAW), and 352–372 (FWLQSNAVVAVLAGLGLATLV). 2 N-linked (GlcNAc...) asparagine glycosylation sites follow: asparagine 403 and asparagine 564.

The protein belongs to the glycosyltransferase 117 (GT117) family.

Its subcellular location is the endoplasmic reticulum membrane. The catalysed reaction is a di-trans,poly-cis-dolichyl beta-D-mannosyl phosphate + L-seryl-[protein] = 3-O-(alpha-D-mannosyl)-L-seryl-[protein] + a di-trans,poly-cis-dolichyl phosphate + H(+). The enzyme catalyses a di-trans,poly-cis-dolichyl beta-D-mannosyl phosphate + L-threonyl-[protein] = 3-O-(alpha-D-mannosyl)-L-threonyl-[protein] + a di-trans,poly-cis-dolichyl phosphate + H(+). Functionally, O-mannosyl-transferase that transfers mannosyl residues to the hydroxyl group of serine or threonine residues of proteins. Specifically glycosylates the IPT/TIG domain of target proteins, such as MET and MST1R/RON. TMEM260-mediated O-mannosylated residues are composed of single mannose glycans that are not elongated or modified. The chain is Protein O-mannosyl-transferase TMEM260 from Mus musculus (Mouse).